We begin with the raw amino-acid sequence, 85 residues long: Large ribosomal subunit protein bL31B (85 aa).

This sequence belongs to the bacterial ribosomal protein bL31 family. Type B subfamily. As to quaternary structure, part of the 50S ribosomal subunit.

The sequence is that of Large ribosomal subunit protein bL31B from Stutzerimonas stutzeri (strain A1501) (Pseudomonas stutzeri).